The chain runs to 434 residues: Trigger factor (434 aa).

In terms of domain architecture, PPIase FKBP-type spans 161-246 (GDRVVIDFAG…VKGVEAPILP (86 aa)).

It belongs to the FKBP-type PPIase family. Tig subfamily.

It localises to the cytoplasm. It catalyses the reaction [protein]-peptidylproline (omega=180) = [protein]-peptidylproline (omega=0). Functionally, involved in protein export. Acts as a chaperone by maintaining the newly synthesized protein in an open conformation. Functions as a peptidyl-prolyl cis-trans isomerase. The polypeptide is Trigger factor (Aromatoleum aromaticum (strain DSM 19018 / LMG 30748 / EbN1) (Azoarcus sp. (strain EbN1))).